A 166-amino-acid chain; its full sequence is Lutropin subunit beta (166 aa).

An N-terminal signal peptide occupies residues 1–21; the sequence is MGGAQVLLLLTLLGTPLVTHG. 6 disulfide bridges follow: cysteine 56–cysteine 104, cysteine 70–cysteine 119, cysteine 73–cysteine 157, cysteine 81–cysteine 135, cysteine 85–cysteine 137, and cysteine 140–cysteine 147. N-linked (GlcNAc...) asparagine glycosylation occurs at asparagine 60.

It belongs to the glycoprotein hormones subunit beta family. As to quaternary structure, heterodimer of a common alpha chain and a unique beta chain which confers biological specificity to thyrotropin, lutropin, follitropin and gonadotropin.

Its subcellular location is the secreted. Functionally, promotes spermatogenesis and ovulation by stimulating the testes and ovaries to synthesize steroids. The polypeptide is Lutropin subunit beta (LHB) (Coturnix japonica (Japanese quail)).